A 516-amino-acid polypeptide reads, in one-letter code: Delta(24)-sterol reductase (516 aa).

A signal peptide spans 1 to 22 (MEPAVSLAVCALLFLLWVRVKG). Residues 23–31 (LEFVLIHQR) lie on the Lumenal side of the membrane. The helical transmembrane segment at 32 to 52 (WVFVCLFLLPLSLIFDIYYYV) threads the bilayer. Over 53–516 (RAWVVFKLSS…YDKICKAARH (464 aa)) the chain is Cytoplasmic. In terms of domain architecture, FAD-binding PCMH-type spans 58–234 (FKLSSAPRLH…VAAEIRIIPA (177 aa)). Position 163–175 (163–175 (TVGGLIMGTGIES)) interacts with FAD.

This sequence belongs to the FAD-binding oxidoreductase/transferase type 4 family. In terms of assembly, interacts with DHCR7; this interaction regulates DHCR7 activity. It depends on FAD as a cofactor.

The protein resides in the endoplasmic reticulum membrane. It localises to the golgi apparatus membrane. It carries out the reaction cholesterol + NADP(+) = desmosterol + NADPH + H(+). The enzyme catalyses lanosterol + NADPH + H(+) = 24,25-dihydrolanosterol + NADP(+). The catalysed reaction is 5alpha-cholest-8-en-3beta-ol + NADP(+) = zymosterol + NADPH + H(+). It participates in steroid biosynthesis; cholesterol biosynthesis. Catalyzes the reduction of the delta-24 double bond of sterol intermediates during cholesterol biosynthesis. In addition to its cholesterol-synthesizing activity, can protect cells from oxidative stress by reducing caspase 3 activity during apoptosis induced by oxidative stress. Also protects against amyloid-beta peptide-induced apoptosis. This Macaca fascicularis (Crab-eating macaque) protein is Delta(24)-sterol reductase (DHCR24).